The chain runs to 300 residues: F-box/LRR-repeat protein 15 (300 aa).

Met1 carries the N-acetylmethionine modification. Residues 19-66 form the F-box domain; it reads LLDLPWEDVLLPHVLSRVPLRQLLWLQRVSRAFRALVQLHLARLRRFD. The segment at 113 to 269 is interaction with SMURF1; it reads NPQLRSVALA…EPSLSRLRKR (157 aa). LRR repeat units follow at residues 141–162, 167–188, 194–215, 220–241, and 246–267; these read RLQRLSLAHCDWVDGLALRGLA, ALEELDLTACRQLKDEAIVYLA, GLRNLSLAVNANVGDTAVQELA, ELQHLDLTGCLRVGSDGIRTLA, and ALRSLRVRHCHHVAEPSLSRLR.

The protein belongs to the FBXL15 family. In terms of assembly, part of the SCF (SKP1-CUL1-F-box) E3 ubiquitin-protein ligase complex SCF(FBXL15) composed of CUL1, SKP1, RBX1 and FBXL15.

It is found in the cytoplasm. It functions in the pathway protein modification; protein ubiquitination. Functionally, substrate recognition component of a SCF (SKP1-CUL1-F-box protein) E3 ubiquitin-protein ligase complex which mediates the ubiquitination and subsequent proteasomal degradation of SMURF1, thereby acting as a positive regulator of the BMP signaling pathway. Required for dorsal/ventral pattern formation and bone mass maintenance. Also mediates ubiquitination of SMURF2 and WWP2. The chain is F-box/LRR-repeat protein 15 (FBXL15) from Bos taurus (Bovine).